The following is a 300-amino-acid chain: SNAP25 homologous protein SNAP33 (300 aa).

Disordered stretches follow at residues 1–76 (MFGL…QSLF) and 176–228 (WKPK…PESA). Phosphoserine is present on Ser29. Residues 38-49 (TLNPSKRTTSEP) show a composition bias toward polar residues. Residues 190–208 (TRDDSPTRRVNHLEKREKL) are compositionally biased toward basic and acidic residues. The t-SNARE coiled-coil homology domain occupies 235–297 (EMEKAKQDDG…QQSNQRGRRL (63 aa)).

Belongs to the SNAP-25 family. In terms of assembly, interacts with the cytokinesis-specific syntaxin KNOLLE and with SYP121. Binds to EXO70B2. Ubiquitous, with a strong expression in root tips, ovules, very young leaves, vascular tissue, hydathodes, stipules and the abscission and dehiscence zones of the siliques.

It is found in the membrane. In terms of biological role, t-SNARE involved in diverse vesicle trafficking and membrane fusion processes, including cell plate formation. May function in the secretory pathway. This is SNAP25 homologous protein SNAP33 from Arabidopsis thaliana (Mouse-ear cress).